Here is a 225-residue protein sequence, read N- to C-terminus: Protein-L-isoaspartate O-methyltransferase (225 aa).

The active site involves S75.

This sequence belongs to the methyltransferase superfamily. L-isoaspartyl/D-aspartyl protein methyltransferase family.

It is found in the cytoplasm. It carries out the reaction [protein]-L-isoaspartate + S-adenosyl-L-methionine = [protein]-L-isoaspartate alpha-methyl ester + S-adenosyl-L-homocysteine. Its function is as follows. Catalyzes the methyl esterification of L-isoaspartyl residues in peptides and proteins that result from spontaneous decomposition of normal L-aspartyl and L-asparaginyl residues. It plays a role in the repair and/or degradation of damaged proteins. The protein is Protein-L-isoaspartate O-methyltransferase of Xanthomonas euvesicatoria pv. vesicatoria (strain 85-10) (Xanthomonas campestris pv. vesicatoria).